The primary structure comprises 228 residues: Ribosomal RNA small subunit methyltransferase G (228 aa).

S-adenosyl-L-methionine-binding positions include G70, 121–122 (AE), and R138.

This sequence belongs to the methyltransferase superfamily. RNA methyltransferase RsmG family.

It is found in the cytoplasm. Specifically methylates the N7 position of a guanine in 16S rRNA. The sequence is that of Ribosomal RNA small subunit methyltransferase G from Thermotoga petrophila (strain ATCC BAA-488 / DSM 13995 / JCM 10881 / RKU-1).